The following is a 105-amino-acid chain: Small ribosomal subunit protein uS10 (105 aa).

It belongs to the universal ribosomal protein uS10 family. In terms of assembly, part of the 30S ribosomal subunit.

Functionally, involved in the binding of tRNA to the ribosomes. This is Small ribosomal subunit protein uS10 from Gloeothece citriformis (strain PCC 7424) (Cyanothece sp. (strain PCC 7424)).